We begin with the raw amino-acid sequence, 50 residues long: Large ribosomal subunit protein bL33 (50 aa).

This sequence belongs to the bacterial ribosomal protein bL33 family.

The polypeptide is Large ribosomal subunit protein bL33 (Endomicrobium trichonymphae).